The sequence spans 432 residues: Enolase (432 aa).

Glutamine 167 contacts (2R)-2-phosphoglycerate. The active-site Proton donor is glutamate 209. Residues aspartate 246, glutamate 291, and aspartate 318 each contribute to the Mg(2+) site. Positions 343, 372, 373, and 394 each coordinate (2R)-2-phosphoglycerate. Lysine 343 (proton acceptor) is an active-site residue.

The protein belongs to the enolase family. As to quaternary structure, component of the RNA degradosome, a multiprotein complex involved in RNA processing and mRNA degradation. Mg(2+) is required as a cofactor.

It is found in the cytoplasm. The protein localises to the secreted. It localises to the cell surface. The catalysed reaction is (2R)-2-phosphoglycerate = phosphoenolpyruvate + H2O. The protein operates within carbohydrate degradation; glycolysis; pyruvate from D-glyceraldehyde 3-phosphate: step 4/5. In terms of biological role, catalyzes the reversible conversion of 2-phosphoglycerate (2-PG) into phosphoenolpyruvate (PEP). It is essential for the degradation of carbohydrates via glycolysis. This Pseudoalteromonas translucida (strain TAC 125) protein is Enolase.